A 211-amino-acid chain; its full sequence is Protein-L-isoaspartate O-methyltransferase (211 aa).

Serine 62 is a catalytic residue.

It belongs to the methyltransferase superfamily. L-isoaspartyl/D-aspartyl protein methyltransferase family.

The protein localises to the cytoplasm. The catalysed reaction is [protein]-L-isoaspartate + S-adenosyl-L-methionine = [protein]-L-isoaspartate alpha-methyl ester + S-adenosyl-L-homocysteine. In terms of biological role, catalyzes the methyl esterification of L-isoaspartyl residues in peptides and proteins that result from spontaneous decomposition of normal L-aspartyl and L-asparaginyl residues. It plays a role in the repair and/or degradation of damaged proteins. In Shewanella sp. (strain MR-4), this protein is Protein-L-isoaspartate O-methyltransferase.